The primary structure comprises 400 residues: CCA-adding enzyme (400 aa).

Residues Gly28 and Arg31 each coordinate ATP. Positions 28 and 31 each coordinate CTP. 2 residues coordinate Mg(2+): Asp41 and Asp43. Positions 112, 155, 158, 161, and 164 each coordinate ATP. CTP is bound by residues Arg112, Asp155, Arg158, Arg161, and Arg164.

It belongs to the tRNA nucleotidyltransferase/poly(A) polymerase family. Bacterial CCA-adding enzyme type 3 subfamily. Homodimer. Requires Mg(2+) as cofactor.

It carries out the reaction a tRNA precursor + 2 CTP + ATP = a tRNA with a 3' CCA end + 3 diphosphate. The catalysed reaction is a tRNA with a 3' CCA end + 2 CTP + ATP = a tRNA with a 3' CCACCA end + 3 diphosphate. Catalyzes the addition and repair of the essential 3'-terminal CCA sequence in tRNAs without using a nucleic acid template. Adds these three nucleotides in the order of C, C, and A to the tRNA nucleotide-73, using CTP and ATP as substrates and producing inorganic pyrophosphate. tRNA 3'-terminal CCA addition is required both for tRNA processing and repair. Also involved in tRNA surveillance by mediating tandem CCA addition to generate a CCACCA at the 3' terminus of unstable tRNAs. While stable tRNAs receive only 3'-terminal CCA, unstable tRNAs are marked with CCACCA and rapidly degraded. This chain is CCA-adding enzyme, found in Staphylococcus aureus (strain Mu3 / ATCC 700698).